The primary structure comprises 222 residues: Flagellin B5 (222 aa).

Residues 1-4 constitute a propeptide that is removed on maturation; that stretch reads MRRG.

The protein belongs to the archaeal flagellin family.

It localises to the archaeal flagellum. Functionally, flagellin is the subunit protein which polymerizes to form the filaments of archaeal flagella. This chain is Flagellin B5 (flaB5), found in Pyrococcus abyssi (strain GE5 / Orsay).